We begin with the raw amino-acid sequence, 221 residues long: Pyridoxine/pyridoxamine 5'-phosphate oxidase (221 aa).

The disordered stretch occupies residues 1–21; the sequence is MDYSDPAELRESYDGAPLDPR. Residues 10–13 and lysine 68 contribute to the substrate site; that span reads RESY. FMN contacts are provided by residues 63–68, 78–79, arginine 84, lysine 85, and glutamine 107; these read RTVLLK and FT. Substrate is bound by residues tyrosine 125, arginine 129, and serine 133. Residues 143-144 and tryptophan 189 each bind FMN; that span reads QS. A substrate-binding site is contributed by 195–197; the sequence is RMH. Arginine 199 is a binding site for FMN.

Belongs to the pyridoxamine 5'-phosphate oxidase family. As to quaternary structure, homodimer. Requires FMN as cofactor.

The enzyme catalyses pyridoxamine 5'-phosphate + O2 + H2O = pyridoxal 5'-phosphate + H2O2 + NH4(+). The catalysed reaction is pyridoxine 5'-phosphate + O2 = pyridoxal 5'-phosphate + H2O2. Its pathway is cofactor metabolism; pyridoxal 5'-phosphate salvage; pyridoxal 5'-phosphate from pyridoxamine 5'-phosphate: step 1/1. The protein operates within cofactor metabolism; pyridoxal 5'-phosphate salvage; pyridoxal 5'-phosphate from pyridoxine 5'-phosphate: step 1/1. In terms of biological role, catalyzes the oxidation of either pyridoxine 5'-phosphate (PNP) or pyridoxamine 5'-phosphate (PMP) into pyridoxal 5'-phosphate (PLP). This Thermobifida fusca (strain YX) protein is Pyridoxine/pyridoxamine 5'-phosphate oxidase.